We begin with the raw amino-acid sequence, 545 residues long: Chaperonin GroEL (545 aa).

Residues 30 to 33 (TLGP), lysine 51, 87 to 91 (DGTTT), glycine 415, and aspartate 495 contribute to the ATP site.

It belongs to the chaperonin (HSP60) family. Forms a cylinder of 14 subunits composed of two heptameric rings stacked back-to-back. Interacts with the co-chaperonin GroES.

It localises to the cytoplasm. It catalyses the reaction ATP + H2O + a folded polypeptide = ADP + phosphate + an unfolded polypeptide.. Its function is as follows. Together with its co-chaperonin GroES, plays an essential role in assisting protein folding. The GroEL-GroES system forms a nano-cage that allows encapsulation of the non-native substrate proteins and provides a physical environment optimized to promote and accelerate protein folding. The protein is Chaperonin GroEL of Shewanella baltica (strain OS155 / ATCC BAA-1091).